The primary structure comprises 848 residues: Protein MEI2-like 2 (848 aa).

2 consecutive RRM domains span residues 197 to 270 and 282 to 355; these read RTLF…FSIP and GTLV…PSRP. Disordered stretches follow at residues 370–400, 455–523, and 826–848; these read IDQD…QYSS, NQPH…SQGQ, and ATGD…GEEL.

Functionally, probable RNA-binding protein that may play a role in growth regulation. The polypeptide is Protein MEI2-like 2 (ML2) (Oryza sativa subsp. japonica (Rice)).